The chain runs to 1040 residues: Neprilysin-4 (1040 aa).

The tract at residues 1–27 (MSRHSQLKLAMPSVHGAPATAPGSPMN) is disordered. Residues 1–45 (MSRHSQLKLAMPSVHGAPATAPGSPMNAKARSVKLGLGVNQRTGR) are required for maintaining muscle integrity. Topologically, residues 1 to 55 (MSRHSQLKLAMPSVHGAPATAPGSPMNAKARSVKLGLGVNQRTGRVQWCPGLTCC) are cytoplasmic. The helical; Signal-anchor for type II membrane protein transmembrane segment at 56-76 (KMLLLLPVVMLPLTLVLILIM) threads the bilayer. Over 77–1040 (RLDGMLAALQ…MNPQKKCSVW (964 aa)) the chain is Extracellular. One can recognise a Peptidase M13 domain in the interval 251–1040 (EEGTREGIRM…MNPQKKCSVW (790 aa)). Cystine bridges form between Cys277-Cys1025, Cys285-Cys985, Cys452-Cys700, and Cys909-Cys1037. N-linked (GlcNAc...) asparagine glycosylation is found at Asn387, Asn593, Asn723, and Asn819. A Zn(2+)-binding site is contributed by His872. Glu873 is a catalytic residue. Residue His876 participates in Zn(2+) binding. Asn916 carries an N-linked (GlcNAc...) asparagine glycan. Zn(2+) is bound at residue Glu934. Asp938 functions as the Proton donor in the catalytic mechanism. The N-linked (GlcNAc...) asparagine glycan is linked to Asn969.

It belongs to the peptidase M13 family. As to quaternary structure, interacts (via intracellular domain) with the putative carbohydrate kinase CG3534. Requires Zn(2+) as cofactor. As to expression, expressed in the gonads and testes of adults, and the adult and larval brain (at protein level). In embryos, expressed in the pericardial, muscle founder and glia cells (at protein level). In stage 12 embryos, expressed in specific dorsal muscle founder cells such as DA1 and DO2, and also in the certain pericardial progenitor cells where expression persists throughout embryogenesis. Expressed in the glia cells of the embryonic, larval and adult central nervous system. Expressed in the somatic muscles of larvae, pupae and adults. Isoform A: Detected in the male abdomen (at protein level). Isoform B: Not detected in the male or female abdomen (at protein level).

Its subcellular location is the cell membrane. It is found in the sarcoplasmic reticulum. It localises to the cytoplasm. It catalyses the reaction Preferential cleavage of polypeptides between hydrophobic residues, particularly with Phe or Tyr at P1'.. In terms of biological role, metalloendoprotease which cleaves peptides at the amino side of hydrophobic residues - such as the hormones Akh and Dh31, and the neuropeptides Allatostatins (AST1, AST2, AST3 and AST4), Crz, Drosulfakinins (DSK-I and DSK-II), Lk, sNPF and the tachykinin peptides TK-1, TK-2, TK-4 and TK-5. Functions in female fertility, memory formation and may also act in regulating insulin signaling and food intake. Likely to be involved in controlling feeding behavior and the expression of insulin-like peptides by cleaving various regulatory peptides that include certain Drosulfakinins, Allatostatins and tachykinin peptides. Required in females for normal patterns of egg laying and hatching. Required in the dorsal paired medial neurons for the proper formation of long-term (LTM) and middle-term memories (MTM). Also required in the mushroom body neurons where it functions redundantly with neprilysins Nep2 and Nep3, in normal LTM formation. Functionally, cleaves angiotensin-1 and tachykinin neuropeptide substance P. Functions in maintaining muscle integrity, possibly independently of its endopeptidase activity. This chain is Neprilysin-4, found in Drosophila melanogaster (Fruit fly).